The chain runs to 757 residues: Dolichyl-diphosphooligosaccharide--protein glycosyltransferase subunit stt-3 (757 aa).

Topologically, residues 1-13 are cytoplasmic; sequence MTSTTAARTASSR. Residues 14–34 form a helical membrane-spanning segment; that stretch reads VGATTLLTIVVLALAWFVGFA. Residues 35–121 lie on the Lumenal side of the membrane; that stretch reads SRLFAIVRFE…VHIREVCVFL (87 aa). Positions 49–51 match the DXD motif 1 motif; the sequence is EFD. Position 51 (D51) interacts with Mn(2+). Residues 122–140 traverse the membrane as a helical segment; the sequence is APTFSGLTAIATYLLTKEL. Residues 141-142 are Cytoplasmic-facing; that stretch reads WS. Residues 143 to 160 form a helical membrane-spanning segment; sequence PGAGLFAACFIAISPGYT. Residues 161–171 are Lumenal-facing; sequence SRSVAGSYDNE. Mn(2+)-binding residues include D169 and E171. The DXD motif 2 signature appears at 169–171; the sequence is DNE. A helical transmembrane segment spans residues 172 to 191; that stretch reads GIAIFALQFTYYLWVKSLKT. Residues 192-193 are Cytoplasmic-facing; sequence GS. A helical membrane pass occupies residues 194-208; it reads IMWASLCALSYFYMV. Topologically, residues 209-210 are lumenal; the sequence is SA. 2 helical membrane-spanning segments follow: residues 211–235 and 236–261; these read WGGY…GRYS and SRLF…FVGF. Over 262-269 the chain is Lumenal; that stretch reads QPVRTSEH. The chain crosses the membrane as a helical span at residues 270 to 289; that stretch reads MPAFGVFGLLQIVALMHYAR. Residues 290-299 lie on the Cytoplasmic side of the membrane; that stretch reads NRITRQQFMT. The chain crosses the membrane as a helical span at residues 300-320; that stretch reads LFVGGLTILGALSVVVYFALV. Residues 321–358 lie on the Lumenal side of the membrane; it reads WGGYVAPFSGRFYSLWDTGYAKIHIPIIASVSEHQPTT. An SVSE motif motif is present at residues 350-353; it reads SVSE. Residues 359–381 traverse the membrane as a helical segment; it reads WVSFFFDLHITAAVFPVGLWYCI. Topologically, residues 382–387 are cytoplasmic; it reads KKVNDE. The chain crosses the membrane as a helical span at residues 388–404; sequence RVFIILYAVSAVYFAGV. At 405–408 the chain is on the lumenal side; that stretch reads MVRL. Residue R407 participates in dolichyl diphosphooligosaccharide binding. Residues 409–430 traverse the membrane as a helical segment; sequence MLTLTPAVCVLAGIGFSYTFEK. Topologically, residues 431–469 are cytoplasmic; that stretch reads YLKDEETKERSSSQSGTTKDEKLYDKAAKNVKSRNANDG. Residues 470 to 495 form a helical membrane-spanning segment; the sequence is DESGVSSNVRTIISIILVIFLLMFVV. The Lumenal segment spans residues 496 to 757; the sequence is HATYVTSNAY…IRPAPTASKA (262 aa). An interacts with target acceptor peptide in protein substrate region spans residues 547-549; that stretch reads WWD. Positions 547 to 551 match the WWDYG motif motif; the sequence is WWDYG. Y552 provides a ligand contact to dolichyl diphosphooligosaccharide. Residues N559 and N566 are each glycosylated (N-linked (GlcNAc...) asparagine). A glycan (N-linked (GlcNAc...) (high mannose) asparagine) is linked at N570. N584 carries N-linked (GlcNAc...) asparagine glycosylation. The DK motif signature appears at 614-621; the sequence is DINKFLWM. The segment at 721 to 757 is disordered; that stretch reads RPTVKSEEATIPIKGKKATQGKNKKGVIRPAPTASKA. Over residues 734 to 747 the composition is skewed to basic residues; that stretch reads KGKKATQGKNKKGV.

The protein belongs to the STT3 family. As to quaternary structure, component of the oligosaccharyltransferase (OST) complex. Mg(2+) is required as a cofactor. Mn(2+) serves as cofactor.

The protein localises to the endoplasmic reticulum membrane. The enzyme catalyses a di-trans,poly-cis-dolichyl diphosphooligosaccharide + L-asparaginyl-[protein] = N(4)-(oligosaccharide-(1-&gt;4)-N-acetyl-beta-D-glucosaminyl-(1-&gt;4)-N-acetyl-beta-D-glucosaminyl)-L-asparaginyl-[protein] + a di-trans,poly-cis-dolichyl diphosphate + H(+). Its pathway is protein modification; protein glycosylation. Catalytic subunit of the oligosaccharyl transferase (OST) complex that catalyzes the initial transfer of a defined glycan (Glc(3)Man(9)GlcNAc(2) in eukaryotes) from the lipid carrier dolichol-pyrophosphate to an asparagine residue within an Asn-X-Ser/Thr consensus motif in nascent polypeptide chains, the first step in protein N-glycosylation. N-glycosylation occurs cotranslationally and the complex associates with the Sec61 complex at the channel-forming translocon complex that mediates protein translocation across the endoplasmic reticulum (ER). All subunits are required for a maximal enzyme activity. This subunit contains the active site and the acceptor peptide and donor lipid-linked oligosaccharide (LLO) binding pockets. In Caenorhabditis elegans, this protein is Dolichyl-diphosphooligosaccharide--protein glycosyltransferase subunit stt-3.